The sequence spans 357 residues: uncharacterized protein (357 aa).

Transmembrane regions (helical) follow at residues 13 to 33 (PVTG…TYLV), 44 to 64 (IACT…CAVY), 72 to 92 (VSTF…TCFL), 148 to 168 (VLTY…FCFV), 181 to 201 (LPIS…SGFF), 203 to 223 (YLFI…LGIW), 266 to 286 (IALT…SALF), 293 to 313 (SISG…PFLI), and 327 to 347 (YWVL…VVLL).

It localises to the mitochondrion membrane. This is an uncharacterized protein from Schizosaccharomyces pombe (strain 972 / ATCC 24843) (Fission yeast).